Consider the following 325-residue polypeptide: DNA-directed RNA polymerase subunit alpha (325 aa).

Positions 1-231 are alpha N-terminal domain (alpha-NTD); it reads MQTSLLKPKI…DQLSVFAALE (231 aa). Residues 246 to 325 are alpha C-terminal domain (alpha-CTD); the sequence is IDPILLRPVD…ENWPPAGLDK (80 aa).

This sequence belongs to the RNA polymerase alpha chain family. As to quaternary structure, homodimer. The RNAP catalytic core consists of 2 alpha, 1 beta, 1 beta' and 1 omega subunit. When a sigma factor is associated with the core the holoenzyme is formed, which can initiate transcription.

The enzyme catalyses RNA(n) + a ribonucleoside 5'-triphosphate = RNA(n+1) + diphosphate. In terms of biological role, DNA-dependent RNA polymerase catalyzes the transcription of DNA into RNA using the four ribonucleoside triphosphates as substrates. The polypeptide is DNA-directed RNA polymerase subunit alpha (Burkholderia mallei (strain NCTC 10247)).